A 402-amino-acid chain; its full sequence is UDP-N-acetylmuramoylalanine--D-glutamate ligase (402 aa).

97 to 103 (GTNGKTT) is an ATP binding site.

This sequence belongs to the MurCDEF family.

The protein resides in the cytoplasm. The enzyme catalyses UDP-N-acetyl-alpha-D-muramoyl-L-alanine + D-glutamate + ATP = UDP-N-acetyl-alpha-D-muramoyl-L-alanyl-D-glutamate + ADP + phosphate + H(+). It functions in the pathway cell wall biogenesis; peptidoglycan biosynthesis. Functionally, cell wall formation. Catalyzes the addition of glutamate to the nucleotide precursor UDP-N-acetylmuramoyl-L-alanine (UMA). The polypeptide is UDP-N-acetylmuramoylalanine--D-glutamate ligase (Campylobacter jejuni subsp. jejuni serotype O:6 (strain 81116 / NCTC 11828)).